The chain runs to 339 residues: MTEAARPLDREEFARRLDRWLGPGAAGGVVLAVSGGPDSTALMGGAARLPPLVPVMVATVDHGLRPEAAAEAEAVARLAGRLGLPHRILAWTGPKPRTRLQEAARAARYRLLLDLAREQGAAALLTAHTLDDQAETVLMRLCAGSGPAGLGGIEPVRHLGGLALVRPFLDLPKARLVATCAAEGWPFVVDPGNADARFARGRLRRVMPHLAAEGLTAARLARLAERLRRNEAALAAAADAALDALARPGARPGGMMLDARGLAVLPEAVALRVLARAIATVVGGNARPARLERLEDVLFGRLLPAIAAGGRLRCTLGGALLHLSGGSLSLSPEPPRRAG.

S34–S39 is a binding site for ATP.

It belongs to the tRNA(Ile)-lysidine synthase family.

Its subcellular location is the cytoplasm. It catalyses the reaction cytidine(34) in tRNA(Ile2) + L-lysine + ATP = lysidine(34) in tRNA(Ile2) + AMP + diphosphate + H(+). Functionally, ligates lysine onto the cytidine present at position 34 of the AUA codon-specific tRNA(Ile) that contains the anticodon CAU, in an ATP-dependent manner. Cytidine is converted to lysidine, thus changing the amino acid specificity of the tRNA from methionine to isoleucine. This is tRNA(Ile)-lysidine synthase from Methylobacterium nodulans (strain LMG 21967 / CNCM I-2342 / ORS 2060).